A 491-amino-acid polypeptide reads, in one-letter code: Aspartyl/glutamyl-tRNA(Asn/Gln) amidotransferase subunit B (491 aa).

Belongs to the GatB/GatE family. GatB subfamily. Heterotrimer of A, B and C subunits.

It catalyses the reaction L-glutamyl-tRNA(Gln) + L-glutamine + ATP + H2O = L-glutaminyl-tRNA(Gln) + L-glutamate + ADP + phosphate + H(+). It carries out the reaction L-aspartyl-tRNA(Asn) + L-glutamine + ATP + H2O = L-asparaginyl-tRNA(Asn) + L-glutamate + ADP + phosphate + 2 H(+). Functionally, allows the formation of correctly charged Asn-tRNA(Asn) or Gln-tRNA(Gln) through the transamidation of misacylated Asp-tRNA(Asn) or Glu-tRNA(Gln) in organisms which lack either or both of asparaginyl-tRNA or glutaminyl-tRNA synthetases. The reaction takes place in the presence of glutamine and ATP through an activated phospho-Asp-tRNA(Asn) or phospho-Glu-tRNA(Gln). This chain is Aspartyl/glutamyl-tRNA(Asn/Gln) amidotransferase subunit B, found in Prochlorococcus marinus (strain NATL2A).